A 497-amino-acid chain; its full sequence is Glycerol kinase (497 aa).

Position 12 (Thr12) interacts with ADP. ATP contacts are provided by Thr12, Thr13, and Ser14. Thr12 is a binding site for sn-glycerol 3-phosphate. Residue Arg16 participates in ADP binding. Sn-glycerol 3-phosphate-binding residues include Arg82, Glu83, Tyr134, and Asp243. 5 residues coordinate glycerol: Arg82, Glu83, Tyr134, Asp243, and Gln244. 2 residues coordinate ADP: Thr265 and Gly308. ATP contacts are provided by Thr265, Gly308, Gln312, and Gly411. An ADP-binding site is contributed by Gly411.

This sequence belongs to the FGGY kinase family.

It catalyses the reaction glycerol + ATP = sn-glycerol 3-phosphate + ADP + H(+). It participates in polyol metabolism; glycerol degradation via glycerol kinase pathway; sn-glycerol 3-phosphate from glycerol: step 1/1. Inhibited by fructose 1,6-bisphosphate (FBP). Its function is as follows. Key enzyme in the regulation of glycerol uptake and metabolism. Catalyzes the phosphorylation of glycerol to yield sn-glycerol 3-phosphate. This chain is Glycerol kinase, found in Allorhizobium ampelinum (strain ATCC BAA-846 / DSM 112012 / S4) (Agrobacterium vitis (strain S4)).